The primary structure comprises 447 residues: N-succinylarginine dihydrolase (447 aa).

Residues 19-28 (AGLSFGNEAS), Asn-110, and 137-138 (HR) each bind substrate. The active site involves Glu-174. Residue Arg-212 coordinates substrate. His-248 is a catalytic residue. Residues Asp-250 and Asn-359 each contribute to the substrate site. Catalysis depends on Cys-365, which acts as the Nucleophile.

Belongs to the succinylarginine dihydrolase family. Homodimer.

It carries out the reaction N(2)-succinyl-L-arginine + 2 H2O + 2 H(+) = N(2)-succinyl-L-ornithine + 2 NH4(+) + CO2. It participates in amino-acid degradation; L-arginine degradation via AST pathway; L-glutamate and succinate from L-arginine: step 2/5. Its function is as follows. Catalyzes the hydrolysis of N(2)-succinylarginine into N(2)-succinylornithine, ammonia and CO(2). The polypeptide is N-succinylarginine dihydrolase (Salmonella gallinarum (strain 287/91 / NCTC 13346)).